Consider the following 201-residue polypeptide: Ribonuclease HII (201 aa).

An RNase H type-2 domain is found at 10–200 (LIEAGCDEAG…LGDGQLELFS (191 aa)). A divalent metal cation is bound by residues D16, E17, and D108.

This sequence belongs to the RNase HII family. It depends on Mn(2+) as a cofactor. The cofactor is Mg(2+).

It is found in the cytoplasm. It carries out the reaction Endonucleolytic cleavage to 5'-phosphomonoester.. Functionally, endonuclease that specifically degrades the RNA of RNA-DNA hybrids. The protein is Ribonuclease HII of Bacteroides fragilis (strain YCH46).